The primary structure comprises 228 residues: 7-cyano-7-deazaguanine synthase (228 aa).

13-23 (LSGGMDSTLSS) contacts ATP. The Zn(2+) site is built by cysteine 192, cysteine 200, cysteine 203, and cysteine 206.

This sequence belongs to the QueC family. Requires Zn(2+) as cofactor.

The enzyme catalyses 7-carboxy-7-deazaguanine + NH4(+) + ATP = 7-cyano-7-deazaguanine + ADP + phosphate + H2O + H(+). It functions in the pathway purine metabolism; 7-cyano-7-deazaguanine biosynthesis. Catalyzes the ATP-dependent conversion of 7-carboxy-7-deazaguanine (CDG) to 7-cyano-7-deazaguanine (preQ(0)). This Aliarcobacter butzleri (strain RM4018) (Arcobacter butzleri) protein is 7-cyano-7-deazaguanine synthase.